The following is a 612-amino-acid chain: 1-deoxy-D-xylulose-5-phosphate synthase (612 aa).

Residues His-77 and 118-120 (GHS) contribute to the thiamine diphosphate site. Residue Asp-147 coordinates Mg(2+). Residues 148-149 (AA), Asn-176, Tyr-288, and Glu-365 contribute to the thiamine diphosphate site. Asn-176 provides a ligand contact to Mg(2+).

It belongs to the transketolase family. DXPS subfamily. In terms of assembly, homodimer. Mg(2+) serves as cofactor. The cofactor is thiamine diphosphate.

It catalyses the reaction D-glyceraldehyde 3-phosphate + pyruvate + H(+) = 1-deoxy-D-xylulose 5-phosphate + CO2. It functions in the pathway metabolic intermediate biosynthesis; 1-deoxy-D-xylulose 5-phosphate biosynthesis; 1-deoxy-D-xylulose 5-phosphate from D-glyceraldehyde 3-phosphate and pyruvate: step 1/1. Its function is as follows. Catalyzes the acyloin condensation reaction between C atoms 2 and 3 of pyruvate and glyceraldehyde 3-phosphate to yield 1-deoxy-D-xylulose-5-phosphate (DXP). The polypeptide is 1-deoxy-D-xylulose-5-phosphate synthase (Malacoplasma penetrans (strain HF-2) (Mycoplasma penetrans)).